We begin with the raw amino-acid sequence, 77 residues long: Large ribosomal subunit protein bL28 (77 aa).

A disordered region spans residues 1–20 (MSRVCQVTGKGPVTGNNISH).

This sequence belongs to the bacterial ribosomal protein bL28 family.

The protein is Large ribosomal subunit protein bL28 of Pseudomonas fluorescens (strain SBW25).